The primary structure comprises 352 residues: Phosphoribosylformylglycinamidine cyclo-ligase (352 aa).

Belongs to the AIR synthase family.

The protein localises to the cytoplasm. It carries out the reaction 2-formamido-N(1)-(5-O-phospho-beta-D-ribosyl)acetamidine + ATP = 5-amino-1-(5-phospho-beta-D-ribosyl)imidazole + ADP + phosphate + H(+). It functions in the pathway purine metabolism; IMP biosynthesis via de novo pathway; 5-amino-1-(5-phospho-D-ribosyl)imidazole from N(2)-formyl-N(1)-(5-phospho-D-ribosyl)glycinamide: step 2/2. The protein is Phosphoribosylformylglycinamidine cyclo-ligase of Teredinibacter turnerae (strain ATCC 39867 / T7901).